Reading from the N-terminus, the 534-residue chain is (R)-citramalate synthase (534 aa).

One can recognise a Pyruvate carboxyltransferase domain in the interval 11 to 274 (FHVFDTTLRD…KQVLPEGRLR (264 aa)).

Belongs to the alpha-IPM synthase/homocitrate synthase family.

It carries out the reaction pyruvate + acetyl-CoA + H2O = (3R)-citramalate + CoA + H(+). Its pathway is amino-acid biosynthesis; L-isoleucine biosynthesis; 2-oxobutanoate from pyruvate: step 1/3. Catalyzes the condensation of pyruvate and acetyl-coenzyme A to form (R)-citramalate. The chain is (R)-citramalate synthase from Streptomyces coelicolor (strain ATCC BAA-471 / A3(2) / M145).